The chain runs to 306 residues: Putative S-adenosyl-L-methionine-dependent methyltransferase MAV_4442 (306 aa).

Residues aspartate 129 and aspartate 158–leucine 159 contribute to the S-adenosyl-L-methionine site.

The protein belongs to the UPF0677 family.

In terms of biological role, exhibits S-adenosyl-L-methionine-dependent methyltransferase activity. The polypeptide is Putative S-adenosyl-L-methionine-dependent methyltransferase MAV_4442 (Mycobacterium avium (strain 104)).